We begin with the raw amino-acid sequence, 84 residues long: Alpha-mammal toxin Aah3 (84 aa).

The N-terminal stretch at 1 to 19 (MNYLVMISLALLLMTGVES) is a signal peptide. The LCN-type CS-alpha/beta domain occupies 21–82 (RDGYIVDSKN…PIKDPSYKCH (62 aa)). Intrachain disulfides connect C31–C81, C35–C53, C39–C63, and C43–C65. Residue R84 is a propeptide, removed by a carboxypeptidase.

This sequence belongs to the long (4 C-C) scorpion toxin superfamily. Sodium channel inhibitor family. Alpha subfamily. Expressed by the venom gland.

The protein localises to the secreted. Its function is as follows. Alpha toxins bind voltage-independently at site-3 of sodium channels (Nav) and inhibit the inactivation of the activated channels, thereby blocking neuronal transmission. The chain is Alpha-mammal toxin Aah3 from Androctonus australis (Sahara scorpion).